The sequence spans 124 residues: Small ribosomal subunit protein uS12 (124 aa).

At D89 the chain carries 3-methylthioaspartic acid. Positions 104-124 are disordered; it reads TAGVKDRRQSRSKYGAKTPKE.

It belongs to the universal ribosomal protein uS12 family. As to quaternary structure, part of the 30S ribosomal subunit. Contacts proteins S8 and S17. May interact with IF1 in the 30S initiation complex.

Its function is as follows. With S4 and S5 plays an important role in translational accuracy. Functionally, interacts with and stabilizes bases of the 16S rRNA that are involved in tRNA selection in the A site and with the mRNA backbone. Located at the interface of the 30S and 50S subunits, it traverses the body of the 30S subunit contacting proteins on the other side and probably holding the rRNA structure together. The combined cluster of proteins S8, S12 and S17 appears to hold together the shoulder and platform of the 30S subunit. This is Small ribosomal subunit protein uS12 from Parasynechococcus marenigrum (strain WH8102).